A 178-amino-acid polypeptide reads, in one-letter code: Transcription termination/antitermination protein NusG (178 aa).

Residues 126–156 form the KOW domain; it reads VGQQVRVNEGPFADFNGVVEEVNYERNKLRV.

It belongs to the NusG family.

Its function is as follows. Participates in transcription elongation, termination and antitermination. The chain is Transcription termination/antitermination protein NusG from Neisseria meningitidis serogroup B (strain ATCC BAA-335 / MC58).